Here is an 82-residue protein sequence, read N- to C-terminus: Small ribosomal subunit protein bS16 (82 aa).

This sequence belongs to the bacterial ribosomal protein bS16 family.

The chain is Small ribosomal subunit protein bS16 from Dehalococcoides mccartyi (strain ATCC BAA-2266 / KCTC 15142 / 195) (Dehalococcoides ethenogenes (strain 195)).